Consider the following 869-residue polypeptide: Valine--tRNA ligase (869 aa).

The short motif at 47–57 (PYPTGNFHIGN) is the 'HIGH' region element. The 'KMSKS' region motif lies at 521-525 (KMSKS). Lys524 lines the ATP pocket.

Belongs to the class-I aminoacyl-tRNA synthetase family. ValS type 2 subfamily.

It is found in the cytoplasm. It catalyses the reaction tRNA(Val) + L-valine + ATP = L-valyl-tRNA(Val) + AMP + diphosphate. Its function is as follows. Catalyzes the attachment of valine to tRNA(Val). As ValRS can inadvertently accommodate and process structurally similar amino acids such as threonine, to avoid such errors, it has a 'posttransfer' editing activity that hydrolyzes mischarged Thr-tRNA(Val) in a tRNA-dependent manner. The chain is Valine--tRNA ligase from Methanosarcina barkeri (strain Fusaro / DSM 804).